The following is a 159-amino-acid chain: Phosphopantetheine adenylyltransferase (159 aa).

T10 contributes to the substrate binding site. Residues 10–11 (TF) and H18 each bind ATP. Residues K42, M74, and R88 each coordinate substrate. Residues 89–91 (GLR), E99, and 124–130 (WSFISSS) each bind ATP.

Belongs to the bacterial CoaD family. As to quaternary structure, homohexamer. Mg(2+) serves as cofactor.

Its subcellular location is the cytoplasm. The enzyme catalyses (R)-4'-phosphopantetheine + ATP + H(+) = 3'-dephospho-CoA + diphosphate. Its pathway is cofactor biosynthesis; coenzyme A biosynthesis; CoA from (R)-pantothenate: step 4/5. Reversibly transfers an adenylyl group from ATP to 4'-phosphopantetheine, yielding dephospho-CoA (dPCoA) and pyrophosphate. The polypeptide is Phosphopantetheine adenylyltransferase (Salmonella choleraesuis (strain SC-B67)).